Here is a 553-residue protein sequence, read N- to C-terminus: Probable bifunctional riboflavin biosynthesis protein RIBA 2, chloroplastic (553 aa).

The transit peptide at 1–56 (MASISPTSSSVAALRGHPVQFVKGGAVSKEAKGSISFSPVANSNNANVKFTGLRVA) directs the protein to the chloroplast. The tract at residues 62–336 (DGAFPGDGYS…IADLIRYRRK (275 aa)) is DHBP synthase. Positions 70–90 (YSGNDNTVLPKSTSVRGQDYP) are disordered. Polar residues predominate over residues 72–85 (GNDNTVLPKSTSVR). D-ribulose 5-phosphate contacts are provided by residues 160–161 (RE), Asp165, 275–279 (RAGHT), and Glu299. Glu161 serves as a coordination point for Mg(2+). Mg(2+) is bound at residue His278. Residues 337-553 (RDRLVERSSV…TGSNGAKGEH (217 aa)) are GTP cyclohydrolase II. 387–391 (RVHSE) contacts GTP. Zn(2+)-binding residues include Cys392, Cys403, and Cys405. Residues Gln408, 431–433 (EGR), and Thr453 each bind GTP. The Proton acceptor; for GTP cyclohydrolase activity role is filled by Asp465. The Nucleophile; for GTP cyclohydrolase activity role is filled by Arg467. GTP contacts are provided by Thr488 and Lys493.

The protein in the N-terminal section; belongs to the DHBP synthase family. This sequence in the C-terminal section; belongs to the GTP cyclohydrolase II family. The cofactor is Mg(2+). Mn(2+) is required as a cofactor. Requires Zn(2+) as cofactor.

The protein localises to the plastid. The protein resides in the chloroplast. It catalyses the reaction D-ribulose 5-phosphate = (2S)-2-hydroxy-3-oxobutyl phosphate + formate + H(+). The enzyme catalyses GTP + 4 H2O = 2,5-diamino-6-hydroxy-4-(5-phosphoribosylamino)-pyrimidine + formate + 2 phosphate + 3 H(+). Its pathway is cofactor biosynthesis; riboflavin biosynthesis; 2-hydroxy-3-oxobutyl phosphate from D-ribulose 5-phosphate: step 1/1. The protein operates within cofactor biosynthesis; riboflavin biosynthesis; 5-amino-6-(D-ribitylamino)uracil from GTP: step 1/4. Its function is as follows. Involved in riboflavin biosynthesis. Catalyzes both the conversion of D-ribulose 5-phosphate to formate and 3,4-dihydroxy-2-butanone 4-phosphate and the conversion of GTP to 2,5-diamino-6-ribosylamino-4(3H)-pyrimidinone 5'-phosphate (DARP), formate and pyrophosphate. The sequence is that of Probable bifunctional riboflavin biosynthesis protein RIBA 2, chloroplastic (RIBA2) from Oryza sativa subsp. japonica (Rice).